The sequence spans 198 residues: Lipid A 4'-phosphatase (198 aa).

A helical membrane pass occupies residues 143–165; the sequence is AGQHTILQVTIGSLIAWGFAYLF.

This sequence belongs to the lipid A LpxF 4'-phosphatase family.

It localises to the cell inner membrane. It functions in the pathway bacterial outer membrane biogenesis; LPS lipid A biosynthesis. Its function is as follows. Removes the 4'-phosphate group from tetra- and hexaacylated lipid A species, has no 1-phosphatase or Kdo hydrolase activity. Absence of the 4'-phosphate group renders the bacteria resistant to host-derived cationic antimicrobial peptides (CAMP), allowing it to camouflage itself from the host innate immune response, and plays a critical role in the long-term colonization of the host's stomach. This chain is Lipid A 4'-phosphatase, found in Helicobacter pylori (strain J99 / ATCC 700824) (Campylobacter pylori J99).